The primary structure comprises 160 residues: Eosinophil cationic protein (160 aa).

The first 27 residues, 1-27, serve as a signal peptide directing secretion; that stretch reads MVPKLFTSQICLLLLLGLMGVEGSLHA. The interval 28-72 is required for nearly all of the bactericidal activities; partially involved in LPS-binding; the sequence is RPPQFTKAQWFAIQHINVNPPRCTIAMRVINNYQRRCKNQNTFLR. Residue His-42 is the Proton acceptor of the active site. Cystine bridges form between Cys-50–Cys-110, Cys-64–Cys-123, Cys-82–Cys-138, and Cys-89–Cys-98. Tyr-60 bears the 3'-nitrotyrosine mark. 65-69 serves as a coordination point for substrate; sequence KNQNT. Asn-92 and Asn-119 each carry an N-linked (GlcNAc...) asparagine glycan. His-155 functions as the Proton donor in the catalytic mechanism.

This sequence belongs to the pancreatic ribonuclease family. Interacts with bacterial lipopolysaccharide (LPS) and lipoteichoic acid (LTA). In vitro interacts with phospholipid bilayers.

It is found in the secreted. Its function is as follows. Cytotoxin and helminthotoxin with low-efficiency ribonuclease activity. Possesses a wide variety of biological activities. Exhibits antibacterial activity. The polypeptide is Eosinophil cationic protein (RNASE3) (Macaca fascicularis (Crab-eating macaque)).